Reading from the N-terminus, the 534-residue chain is Cytochrome c oxidase subunit 1 (534 aa).

The Mitochondrial matrix portion of the chain corresponds to 1–14 (MVQRWLYSTNAKDI). The helical transmembrane segment at 15–39 (AVLYFMLAIFSGMAGTAMSLIIRLE) threads the bilayer. Positions 39, 42, and 44 each coordinate Ca(2+). Residues 40–54 (LAAPGSQYLHGNSQL) lie on the Mitochondrial intermembrane side of the membrane. The helical transmembrane segment at 55–88 (FNVLVVGHAVLMIFFLVMPALIGGFGNYLLPLMI) threads the bilayer. Residue His62 participates in Fe(II)-heme a binding. Over 89–97 (GATDTAFPR) the chain is Mitochondrial matrix. The chain crosses the membrane as a helical span at residues 98–118 (INNIAFWVLPMGLVCLVTSTL). Residues 119 to 142 (VESGAGTGWTVYPPLSSIQAHSGP) lie on the Mitochondrial intermembrane side of the membrane. Residues 143-171 (SVDLAIFALHLTSISSLLGAINFIVTTLN) form a helical membrane-spanning segment. Over 172–183 (MRTNGMTMHKLP) the chain is Mitochondrial matrix. Residues 184–215 (LFVWSIFITAFLLLLSLPVLSAGITMLLLDRN) form a helical membrane-spanning segment. Topologically, residues 216-228 (FNTSFFEVSGGGD) are mitochondrial intermembrane. Residues 229-263 (PILYEHLFWFFGHPEVYILIIPGFGIISHVVSTYS) traverse the membrane as a helical segment. A Cu cation-binding site is contributed by His241. Positions 241–245 (HPEVY) form a cross-link, 1'-histidyl-3'-tyrosine (His-Tyr). An O2-binding site is contributed by Tyr245. At 264–269 (KKPVFG) the chain is on the mitochondrial matrix side. A helical transmembrane segment spans residues 270–295 (EISMVYAMASIGLLGFLVWSHHMYIV). His290 and His291 together coordinate Cu cation. Residues 296-298 (GLD) lie on the Mitochondrial intermembrane side of the membrane. Residues 299–327 (ADTRAYFTSATMIIAIPTGIKIFSWLATI) traverse the membrane as a helical segment. At 328–335 (HGGSIRLA) the chain is on the mitochondrial matrix side. The chain crosses the membrane as a helical span at residues 336 to 358 (TPMLYAIAFLFLFTMGGLTGVAL). Residues 359 to 370 (ANASLDVAFHDT) lie on the Mitochondrial intermembrane side of the membrane. 2 residues coordinate Mg(2+): His368 and Asp369. A helical membrane pass occupies residues 371–400 (YYVVGHFHYVLSMGAIFSLFAGYYYWSPQI). A heme a3-binding site is contributed by His376. A Fe(II)-heme a-binding site is contributed by His378. The Mitochondrial matrix portion of the chain corresponds to 401–406 (LGLNYN). The helical transmembrane segment at 407-431 (EKLAQIQFWLIFIGANVIFFPMHFL) threads the bilayer. At 432–449 (GINGMPRRIPDYPDAFAG) the chain is on the mitochondrial intermembrane side. Pro441 contacts Ca(2+). The chain crosses the membrane as a helical span at residues 450-474 (WNYVASIGSFIATLSLFLFIYILYD). The Mitochondrial matrix portion of the chain corresponds to 475 to 534 (QLVNGLNNKVNNKSVIYNKAPDFVESNTIFNLNTVKSSSIEFLLTSPPAVHSFNTPAVQS).

This sequence belongs to the heme-copper respiratory oxidase family. As to quaternary structure, component of the cytochrome c oxidase (complex IV, CIV), a multisubunit enzyme composed of 12 subunits. The complex is composed of a catalytic core of 3 subunits COX1, COX2 and COX3, encoded in the mitochondrial DNA, and 9 supernumerary subunits COX4, COX5A (or COX5B), COX6, COX7, COX8, COX9, COX12, COX13 and COX26, which are encoded in the nuclear genome. The complex exists as a monomer or a dimer and forms supercomplexes (SCs) in the inner mitochondrial membrane with a dimer of ubiquinol-cytochrome c oxidoreductase (cytochrome b-c1 complex, complex III, CIII), resulting in 2 different assemblies (supercomplexes III(2)IV and III(2)IV(2)). Heme serves as cofactor. The cofactor is Cu cation. In terms of processing, the N-terminus is blocked.

The protein localises to the mitochondrion inner membrane. It carries out the reaction 4 Fe(II)-[cytochrome c] + O2 + 8 H(+)(in) = 4 Fe(III)-[cytochrome c] + 2 H2O + 4 H(+)(out). The protein operates within energy metabolism; oxidative phosphorylation. Component of the cytochrome c oxidase, the last enzyme in the mitochondrial electron transport chain which drives oxidative phosphorylation. The respiratory chain contains 3 multisubunit complexes succinate dehydrogenase (complex II, CII), ubiquinol-cytochrome c oxidoreductase (cytochrome b-c1 complex, complex III, CIII) and cytochrome c oxidase (complex IV, CIV), that cooperate to transfer electrons derived from NADH and succinate to molecular oxygen, creating an electrochemical gradient over the inner membrane that drives transmembrane transport and the ATP synthase. Cytochrome c oxidase is the component of the respiratory chain that catalyzes the reduction of oxygen to water. Electrons originating from reduced cytochrome c in the intermembrane space (IMS) are transferred via the dinuclear copper A center (CU(A)) of COX2 and heme A of COX1 to the active site in COX1, a binuclear center (BNC) formed by heme A3 and copper B (CU(B)). The BNC reduces molecular oxygen to 2 water molecules using 4 electrons from cytochrome c in the IMS and 4 protons from the mitochondrial matrix. COX1 is a catalytic core subunit containing heme A and the active site BNC with heme A3 and the copper atom CU(B). This chain is Cytochrome c oxidase subunit 1 (COX1), found in Saccharomyces cerevisiae (strain ATCC 204508 / S288c) (Baker's yeast).